Here is a 647-residue protein sequence, read N- to C-terminus: DNA ligase (647 aa).

Residues 30–34, 79–80, and E105 each bind NAD(+); these read DEEYD and SM. The active-site N6-AMP-lysine intermediate is K107. 3 residues coordinate NAD(+): R128, E162, and K301. Zn(2+) is bound by residues C395, C398, C411, and C416. In terms of domain architecture, BRCT spans 570–647; the sequence is KSDGVIFGKT…ESAFNELVKE (78 aa).

This sequence belongs to the NAD-dependent DNA ligase family. LigA subfamily. The cofactor is Mg(2+). Mn(2+) is required as a cofactor.

It catalyses the reaction NAD(+) + (deoxyribonucleotide)n-3'-hydroxyl + 5'-phospho-(deoxyribonucleotide)m = (deoxyribonucleotide)n+m + AMP + beta-nicotinamide D-nucleotide.. Functionally, DNA ligase that catalyzes the formation of phosphodiester linkages between 5'-phosphoryl and 3'-hydroxyl groups in double-stranded DNA using NAD as a coenzyme and as the energy source for the reaction. It is essential for DNA replication and repair of damaged DNA. This chain is DNA ligase, found in Campylobacter jejuni subsp. jejuni serotype O:23/36 (strain 81-176).